The primary structure comprises 142 residues: Large ribosomal subunit protein uL13 (142 aa).

The protein belongs to the universal ribosomal protein uL13 family. In terms of assembly, part of the 50S ribosomal subunit.

In terms of biological role, this protein is one of the early assembly proteins of the 50S ribosomal subunit, although it is not seen to bind rRNA by itself. It is important during the early stages of 50S assembly. This chain is Large ribosomal subunit protein uL13, found in Leptothrix cholodnii (strain ATCC 51168 / LMG 8142 / SP-6) (Leptothrix discophora (strain SP-6)).